A 317-amino-acid polypeptide reads, in one-letter code: Melanocyte-stimulating hormone receptor (317 aa).

Topologically, residues 1–37 (MPVQGSLRSLVGAVNSTPTASPHLRPATNQTEPQCLE) are extracellular. A glycan (N-linked (GlcNAc...) asparagine) is linked at Asn29. The helical transmembrane segment at 38–63 (VSVPVGLFLCLGLVSLVENTLVVAVI) threads the bilayer. Residues 64–72 (AKNRNLHSP) are Cytoplasmic-facing. Residues 73–93 (MYCFICCLALSDLLVSVSNVL) traverse the membrane as a helical segment. Over 94 to 118 (KTAVLLLLEAGALAAQATVVQQLGN) the chain is Extracellular. Residues 119–140 (VINMLICSSMVSSLCFLGAIAM) traverse the membrane as a helical segment. Residues 141–163 (DRYISIFYALRYHSIVTLARARR) are Cytoplasmic-facing. Residues 164-183 (AIAAVWVASILSSILFFTYY) form a helical membrane-spanning segment. The Extracellular segment spans residues 184–191 (DRTAALLC). A helical transmembrane segment spans residues 192 to 211 (LVVFFLAMLVLMAVLYVHML). Topologically, residues 212-240 (TQACQHAQGIARLHKRQHPVQQGWGLKGA) are cytoplasmic. The helical transmembrane segment at 241 to 266 (ATLAVLLGVFFLCWGPLFLHLTLIAV) threads the bilayer. Over 267-279 (CPQHPTCNCIVKN) the chain is Extracellular. A helical transmembrane segment spans residues 280–300 (FKLFLALIICNAIVDPLIYAF). Topologically, residues 301-317 (RSQELRKTLKEVLLFSW) are cytoplasmic.

Belongs to the G-protein coupled receptor 1 family. Interacts with MGRN1, but does not undergo MGRN1-mediated ubiquitination; this interaction competes with GNAS-binding and thus inhibits agonist-induced cAMP production. Interacts with OPN3; the interaction results in a decrease in MC1R-mediated cAMP signaling and ultimately a decrease in melanin production in melanocytes.

It is found in the cell membrane. In terms of biological role, receptor for MSH (alpha, beta and gamma) and ACTH. The activity of this receptor is mediated by G proteins which activate adenylate cyclase. Mediates melanogenesis, the production of eumelanin (black/brown) and phaeomelanin (red/yellow), via regulation of cAMP signaling in melanocytes. This Varecia rubra (Red ruffed lemur) protein is Melanocyte-stimulating hormone receptor (MC1R).